The following is a 776-amino-acid chain: Photosystem I P700 chlorophyll a apoprotein A1 (776 aa).

8 helical membrane passes run isoleucine 76–alanine 99, leucine 162–histidine 185, leucine 201–asparagine 225, valine 309–tyrosine 327, tryptophan 368–tyrosine 391, leucine 407–isoleucine 433, alanine 455–histidine 477, and leucine 557–leucine 575. The [4Fe-4S] cluster site is built by cysteine 599 and cysteine 608. A run of 2 helical transmembrane segments spans residues histidine 615–tryptophan 636 and leucine 690–phenylalanine 712. A divinylchlorophyll a'-binding site is contributed by histidine 701. Divinyl chlorophyll a-binding residues include methionine 709 and tyrosine 717. Tryptophan 718 contributes to the phylloquinone binding site. The helical transmembrane segment at alanine 750–alanine 770 threads the bilayer.

The protein belongs to the PsaA/PsaB family. In terms of assembly, the PsaA/B heterodimer binds the P700 chlorophyll special pair and subsequent electron acceptors. PSI consists of a core antenna complex that captures photons, and an electron transfer chain that converts photonic excitation into a charge separation. The cyanobacterial PSI reaction center is composed of one copy each of PsaA,B,C,D,E,F,I,J,K,L,M and X, and forms trimeric complexes. It depends on PSI electron transfer chain: 5 divinyl chlorophyll a, 1 divinyl chlorophyll a', 2 phylloquinones and 3 4Fe-4S clusters. PSI core antenna: 90 divinyl chlorophyll a, 22 carotenoids, 3 phospholipids and 1 galactolipid. P700 is a divinyl chlorophyll a/divinyl chlorophyll a' dimer, A0 is one or more chlorophyll divinyl a, A1 is one or both phylloquinones and FX is a shared 4Fe-4S iron-sulfur center. as a cofactor.

The protein localises to the cellular thylakoid membrane. It catalyses the reaction reduced [plastocyanin] + hnu + oxidized [2Fe-2S]-[ferredoxin] = oxidized [plastocyanin] + reduced [2Fe-2S]-[ferredoxin]. Its function is as follows. PsaA and PsaB bind P700, the primary electron donor of photosystem I (PSI), as well as the electron acceptors A0, A1 and FX. PSI is a plastocyanin/cytochrome c6-ferredoxin oxidoreductase, converting photonic excitation into a charge separation, which transfers an electron from the donor P700 chlorophyll pair to the spectroscopically characterized acceptors A0, A1, FX, FA and FB in turn. Oxidized P700 is reduced on the lumenal side of the thylakoid membrane by plastocyanin or cytochrome c6. The polypeptide is Photosystem I P700 chlorophyll a apoprotein A1 (Prochlorococcus marinus (strain MIT 9313)).